Reading from the N-terminus, the 219-residue chain is Putative germin-like protein 8-1 (219 aa).

Residues 1 to 23 form the signal peptide; the sequence is MASFISFLLLAALIGMASWQAIA. Cys-33 and Cys-48 form a disulfide bridge. N-linked (GlcNAc...) asparagine glycans are attached at residues Asn-53 and Asn-79. The region spanning 63-215 is the Cupin type-1 domain; the sequence is AMLDKPRDTA…AFQVDKKIID (153 aa). Mn(2+)-binding residues include His-112, His-114, Glu-119, and His-160.

The protein belongs to the germin family. Oligomer (believed to be a pentamer but probably hexamer).

The protein resides in the secreted. The protein localises to the extracellular space. It is found in the apoplast. Plays a role in broad-spectrum disease resistance. Probably has no oxalate oxidase activity even if the active site is conserved. The polypeptide is Putative germin-like protein 8-1 (Oryza sativa subsp. japonica (Rice)).